Consider the following 530-residue polypeptide: Bifunctional purine biosynthesis protein PurH (530 aa).

Positions 1 to 147 constitute an MGS-like domain; that stretch reads MPSIKRALIS…KNWKHVAIVT (147 aa).

This sequence belongs to the PurH family.

It carries out the reaction (6R)-10-formyltetrahydrofolate + 5-amino-1-(5-phospho-beta-D-ribosyl)imidazole-4-carboxamide = 5-formamido-1-(5-phospho-D-ribosyl)imidazole-4-carboxamide + (6S)-5,6,7,8-tetrahydrofolate. The catalysed reaction is IMP + H2O = 5-formamido-1-(5-phospho-D-ribosyl)imidazole-4-carboxamide. Its pathway is purine metabolism; IMP biosynthesis via de novo pathway; 5-formamido-1-(5-phospho-D-ribosyl)imidazole-4-carboxamide from 5-amino-1-(5-phospho-D-ribosyl)imidazole-4-carboxamide (10-formyl THF route): step 1/1. It functions in the pathway purine metabolism; IMP biosynthesis via de novo pathway; IMP from 5-formamido-1-(5-phospho-D-ribosyl)imidazole-4-carboxamide: step 1/1. This is Bifunctional purine biosynthesis protein PurH from Neisseria meningitidis serogroup A / serotype 4A (strain DSM 15465 / Z2491).